Here is a 64-residue protein sequence, read N- to C-terminus: MMIPVRCFTCGTVIGEHWDEFKQRARDGNEDPGEVLDDLGIKRHCCRRMMVSHRDLVDVVAPYQ.

Zn(2+) contacts are provided by Cys-7, Cys-10, Cys-45, and Cys-46.

It belongs to the archaeal Rpo10/eukaryotic RPB10 RNA polymerase subunit family. Part of the RNA polymerase complex. Zn(2+) serves as cofactor.

It is found in the cytoplasm. It carries out the reaction RNA(n) + a ribonucleoside 5'-triphosphate = RNA(n+1) + diphosphate. Its function is as follows. DNA-dependent RNA polymerase (RNAP) catalyzes the transcription of DNA into RNA using the four ribonucleoside triphosphates as substrates. This chain is DNA-directed RNA polymerase subunit Rpo10, found in Haloquadratum walsbyi (strain DSM 16790 / HBSQ001).